The following is a 266-amino-acid chain: Proteasome subunit beta type-7 (266 aa).

Positions 1–33 are excised as a propeptide; sequence MNHDPFSWGRPADSTYGAYNTQIANAGASPMVN.

This sequence belongs to the peptidase T1B family. As to quaternary structure, the 26S proteasome consists of a 20S proteasome core and two 19S regulatory subunits. The 20S proteasome core is composed of 28 subunits that are arranged in four stacked rings, resulting in a barrel-shaped structure. The two end rings are each formed by seven alpha subunits, and the two central rings are each formed by seven beta subunits. The catalytic chamber with the active sites is on the inside of the barrel. Interacts with CIC1.

The protein localises to the cytoplasm. The protein resides in the nucleus. In terms of biological role, non-catalytic component of the proteasome which degrades poly-ubiquitinated proteins in the cytoplasm and in the nucleus. It is essential for the regulated turnover of proteins and for the removal of misfolded proteins. The proteasome is a multicatalytic proteinase complex that is characterized by its ability to cleave peptides with Arg, Phe, Tyr, Leu, and Glu adjacent to the leaving group at neutral or slightly basic pH. It has an ATP-dependent proteolytic activity. PRE3 and PRE4 are necessary for the peptidyl-glutamyl-peptide-hydrolyzing activity. The chain is Proteasome subunit beta type-7 (PRE4) from Saccharomyces cerevisiae (strain ATCC 204508 / S288c) (Baker's yeast).